The primary structure comprises 311 residues: Interleukin-20 receptor subunit beta (311 aa).

Positions 1-29 are cleaved as a signal peptide; the sequence is MQTFTMVLEEIWTSLFMWFFYALIPCLLT. Residues 30–233 are Extracellular-facing; it reads DEVAILPAPQ…VEVQGEAIPL (204 aa). Fibronectin type-III domains follow at residues 37 to 136 and 144 to 228; these read APQN…RNST and EITK…EVQG. A glycan (N-linked (GlcNAc...) asparagine) is linked at Asn-40. An intrachain disulfide couples Cys-89 to Cys-97. N-linked (GlcNAc...) asparagine glycosylation is present at Asn-134. A disulfide bridge connects residues Cys-202 and Cys-223. The helical transmembrane segment at 234-254 threads the bilayer; that stretch reads VLALFAFVGFMLILVVVPLFV. The Cytoplasmic portion of the chain corresponds to 255–311; the sequence is WKMGRLLQYSCCPVVVLPDTLKITNSPQKLISCRREEVDACATAVMSPEELLRAWIS.

This sequence belongs to the type II cytokine receptor family. As to quaternary structure, heterodimer with IL20RA and heterodimer with IL22RA1. Widely expressed with highest levels in skin and testis. Highly expressed in psoriatic skin.

The protein localises to the membrane. Functionally, the IL20RA/IL20RB dimer is a receptor for IL19, IL20 and IL24. The IL22RA1/IL20RB dimer is a receptor for IL20 and IL24. In Homo sapiens (Human), this protein is Interleukin-20 receptor subunit beta (IL20RB).